A 371-amino-acid chain; its full sequence is DNA replication and repair protein RecF (371 aa).

30-37 (GQNGSGKT) is an ATP binding site.

Belongs to the RecF family.

It is found in the cytoplasm. In terms of biological role, the RecF protein is involved in DNA metabolism; it is required for DNA replication and normal SOS inducibility. RecF binds preferentially to single-stranded, linear DNA. It also seems to bind ATP. The chain is DNA replication and repair protein RecF from Chlorobium phaeovibrioides (strain DSM 265 / 1930) (Prosthecochloris vibrioformis (strain DSM 265)).